The sequence spans 503 residues: Serine/threonine-protein kinase chk-1 (503 aa).

Positions 24–286 (YRVVQTLGEG…IEQIQADPWY (263 aa)) constitute a Protein kinase domain. ATP contacts are provided by residues 30–38 (LGEGAFGEV) and Lys54. Asp150 (proton acceptor) is an active-site residue. Residues 320–346 (SAKRRHLETPNEKSTLAERQNASFSQP) form a disordered region. The span at 331-346 (EKSTLAERQNASFSQP) shows a compositional bias: polar residues. Ser344 is subject to Phosphoserine.

This sequence belongs to the protein kinase superfamily. CAMK Ser/Thr protein kinase family. NIM1 subfamily. In terms of tissue distribution, expressed in the germline.

Its subcellular location is the cytoplasm. It is found in the nucleus. It localises to the perinuclear region. The catalysed reaction is L-seryl-[protein] + ATP = O-phospho-L-seryl-[protein] + ADP + H(+). It carries out the reaction L-threonyl-[protein] + ATP = O-phospho-L-threonyl-[protein] + ADP + H(+). Functionally, serine/threonine-protein kinase which is required for checkpoint-mediated cell cycle arrest and activation of DNA repair in response to the presence of DNA damage or unreplicated DNA. May also negatively regulate cell cycle progression during unperturbed cell cycles. Required for checkpoint mediated cell cycle arrest in response to DNA damage in germline cells. Delays cell-cycle reentry of the Z2 and Z3 primordial germ cells in response to transcription-induced DNA damage as they emerge from cell cycle arrest in L1 larvae. Essential for embryogenesis. This Caenorhabditis elegans protein is Serine/threonine-protein kinase chk-1.